The primary structure comprises 96 residues: MMRKLAVLVLAVAMVAACGGGVVGVAGAGCNAGQLTVCTGAIAGGARPTAACCSSLRAQQGCFCQFAKDPRYGRYVNSPNARKAVSSCGIALPTCH.

An N-terminal signal peptide occupies residues 1–27; it reads MMRKLAVLVLAVAMVAACGGGVVGVAG. Cystine bridges form between Cys-30–Cys-62, Cys-38–Cys-52, Cys-53–Cys-88, and Cys-64–Cys-95.

In terms of biological role, transfer lipids across membranes. May play a role in plant defense or in the biosynthesis of cuticle layers. The polypeptide is Non-specific lipid-transfer protein 2 (LTP-2) (Oryza sativa subsp. japonica (Rice)).